Here is a 282-residue protein sequence, read N- to C-terminus: tRNA uridine(34) hydroxylase (282 aa).

Residues 128 to 222 (EGRPVVMLDT…YFEEVGGSHY (95 aa)) form the Rhodanese domain. C182 (cysteine persulfide intermediate) is an active-site residue.

Belongs to the TrhO family.

It carries out the reaction uridine(34) in tRNA + AH2 + O2 = 5-hydroxyuridine(34) in tRNA + A + H2O. In terms of biological role, catalyzes oxygen-dependent 5-hydroxyuridine (ho5U) modification at position 34 in tRNAs. The sequence is that of tRNA uridine(34) hydroxylase from Cupriavidus necator (strain ATCC 17699 / DSM 428 / KCTC 22496 / NCIMB 10442 / H16 / Stanier 337) (Ralstonia eutropha).